A 493-amino-acid chain; its full sequence is Anthranilate synthase component 1 (493 aa).

L-tryptophan contacts are provided by residues Ser48 and Pro273–Met275. Residue Gly308–Thr309 coordinates chorismate. Position 335 (Glu335) interacts with Mg(2+). Residues Tyr423, Arg443, Gly457–Gly459, and Gly459 each bind chorismate. A Mg(2+)-binding site is contributed by Glu472.

Belongs to the anthranilate synthase component I family. In terms of assembly, heterotetramer consisting of two non-identical subunits: a beta subunit (TrpG) and a large alpha subunit (TrpE). The cofactor is Mg(2+).

The catalysed reaction is chorismate + L-glutamine = anthranilate + pyruvate + L-glutamate + H(+). Its pathway is amino-acid biosynthesis; L-tryptophan biosynthesis; L-tryptophan from chorismate: step 1/5. With respect to regulation, feedback inhibited by tryptophan. Its function is as follows. Part of a heterotetrameric complex that catalyzes the two-step biosynthesis of anthranilate, an intermediate in the biosynthesis of L-tryptophan. In the first step, the glutamine-binding beta subunit (TrpG) of anthranilate synthase (AS) provides the glutamine amidotransferase activity which generates ammonia as a substrate that, along with chorismate, is used in the second step, catalyzed by the large alpha subunit of AS (TrpE) to produce anthranilate. In the absence of TrpG, TrpE can synthesize anthranilate directly from chorismate and high concentrations of ammonia. This is Anthranilate synthase component 1 (trpE) from Pseudomonas putida (Arthrobacter siderocapsulatus).